Here is a 238-residue protein sequence, read N- to C-terminus: Aspartate/glutamate leucyltransferase (238 aa).

The protein belongs to the R-transferase family. Bpt subfamily.

The protein localises to the cytoplasm. It carries out the reaction N-terminal L-glutamyl-[protein] + L-leucyl-tRNA(Leu) = N-terminal L-leucyl-L-glutamyl-[protein] + tRNA(Leu) + H(+). It catalyses the reaction N-terminal L-aspartyl-[protein] + L-leucyl-tRNA(Leu) = N-terminal L-leucyl-L-aspartyl-[protein] + tRNA(Leu) + H(+). Functions in the N-end rule pathway of protein degradation where it conjugates Leu from its aminoacyl-tRNA to the N-termini of proteins containing an N-terminal aspartate or glutamate. The protein is Aspartate/glutamate leucyltransferase of Shewanella sp. (strain MR-4).